The primary structure comprises 700 residues: Long-chain-fatty-acid--CoA ligase 1 (700 aa).

The segment at 1 to 21 is disordered; sequence MVAQYTVPVGKAANEHETAPR. A Glycyl lysine isopeptide (Lys-Gly) (interchain with G-Cter in ubiquitin) cross-link involves residue lysine 189. 269–280 is a binding site for ATP; the sequence is YTSGSTGEPKGV. An FACS motif is present at residues 531–580; it reads DGWFKTGDIGEWEANGHLKIIDRKKNLVKTMNGEYIALEKLESVYRSNEY.

Belongs to the ATP-dependent AMP-binding enzyme family. As to quaternary structure, interacts with FAT1. Mg(2+) serves as cofactor.

Its subcellular location is the lipid droplet. It localises to the cell membrane. It carries out the reaction a long-chain fatty acid + ATP + CoA = a long-chain fatty acyl-CoA + AMP + diphosphate. It catalyses the reaction (9Z)-octadecenoate + ATP + CoA = (9Z)-octadecenoyl-CoA + AMP + diphosphate. The catalysed reaction is hexadecanoate + ATP + CoA = hexadecanoyl-CoA + AMP + diphosphate. The enzyme catalyses (9Z)-hexadecenoate + ATP + CoA = (9Z)-hexadecenoyl-CoA + AMP + diphosphate. It carries out the reaction tetradecanoate + ATP + CoA = tetradecanoyl-CoA + AMP + diphosphate. It catalyses the reaction (9Z)-tetradecenoate + ATP + CoA = (9Z)-tetradecenoyl-CoA + AMP + diphosphate. The catalysed reaction is (9Z,12Z)-octadecadienoate + ATP + CoA = (9Z,12Z)-octadecadienoyl-CoA + AMP + diphosphate. The enzyme catalyses dodecanoate + ATP + CoA = dodecanoyl-CoA + AMP + diphosphate. It carries out the reaction pentadecanoate + ATP + CoA = pentadecanoyl-CoA + AMP + diphosphate. It catalyses the reaction undecanoate + ATP + CoA = undecanoyl-CoA + AMP + diphosphate. The catalysed reaction is heptadecanoate + ATP + CoA = heptadecanoyl-CoA + AMP + diphosphate. The enzyme catalyses octadecanoate + ATP + CoA = octadecanoyl-CoA + AMP + diphosphate. Its function is as follows. Activates long-chain fatty acids (LCFA) by esterification of the fatty acids into metabolically active CoA-thioesters for subsequent degradation or incorporation into phospholipids. Also facilitates the transport of LCFAs into the cell, either by active transport or by decreasing the intracellular LCFA concentration. It may supplement intracellular myristoyl-CoA pools from exogenous myristate. Preferentially acts on C12:0-C16:0 fatty acids with myristic and pentadecanic acid (C15:0) having the highest activities. Also involved in long-chain base (LCB) uptake of sphingolipids. In contrast ot LCFA uptake, LCB uptake does not require ATP, suggesting that the enzyme is directly involved in active LCB uptake. Involved in the sphingolipid-to-glycerolipid metabolic pathway, converting the sphingolipid metabolite hexadecenoic acid to hexadecenoyl-CoA, which is then further converted to glycerolipids. The protein is Long-chain-fatty-acid--CoA ligase 1 (FAA1) of Saccharomyces cerevisiae (strain ATCC 204508 / S288c) (Baker's yeast).